Reading from the N-terminus, the 520-residue chain is MTEISMLNDIQKIIVLDYGSQYNQLIARRIREFGVFSELKSHHITAQELRDINPIGIVLSGGPNSVYATDAFGIDPEIFELGIPILGICYGMQLITHTLGGKVVPAGQAGHREYGQSSLRLRSASALFAGTPDEQLVLMSHGDAVTEIPEGFHLVGDSNDCPYAAMENTKKRLYGIQFHPEVRHSVYGNDILKNFAISICGGRGDWSMDNFIDMQIAKIRETVGDRKVLLGLSGGVDSSVVGVLLQKAIGDQLTCIFVDHGLLRKNEGDQVMEMLGGRFGLNIIRVDASKRFLDLLAGVEDPEKKRKIIGNEFVYVFDDEASKLKGVDFLAQGTLYTDIIESGTETAQTIKSHHNVGGLPEDMQFELIEPLNTLFKDEVRALGTALGMPDEVVWRQPFPGPGLAIRVMGEITAEKLETVRESDAILREEIAKAGLERDVWQYFTVNTGVRSVGVMGDGRTYDYTIAIRAITSIDGMTADFAQLPWEVLKKISVRIVNEVDHVNRIVYDITSKPPATVEWE.

Residues 12–205 enclose the Glutamine amidotransferase type-1 domain; sequence KIIVLDYGSQ…AISICGGRGD (194 aa). Residue Cys89 is the Nucleophile of the active site. Catalysis depends on residues His179 and Glu181. One can recognise a GMPS ATP-PPase domain in the interval 206–395; it reads WSMDNFIDMQ…LGMPDEVVWR (190 aa). An ATP-binding site is contributed by 233 to 239; it reads SGGVDSS.

In terms of assembly, homodimer.

It catalyses the reaction XMP + L-glutamine + ATP + H2O = GMP + L-glutamate + AMP + diphosphate + 2 H(+). It participates in purine metabolism; GMP biosynthesis; GMP from XMP (L-Gln route): step 1/1. In terms of biological role, catalyzes the synthesis of GMP from XMP. In Streptococcus equi subsp. equi (strain 4047), this protein is GMP synthase [glutamine-hydrolyzing].